The chain runs to 51 residues: Small ribosomal subunit protein uS13 (51 aa).

This sequence belongs to the universal ribosomal protein uS13 family. As to quaternary structure, part of the 30S ribosomal subunit. Forms a loose heterodimer with protein S19. Forms two bridges to the 50S subunit in the 70S ribosome.

Functionally, located at the top of the head of the 30S subunit, it contacts several helices of the 16S rRNA. In the 70S ribosome it contacts the 23S rRNA (bridge B1a) and protein L5 of the 50S subunit (bridge B1b), connecting the 2 subunits; these bridges are implicated in subunit movement. Contacts the tRNAs in the A and P-sites. In Lactococcus lactis subsp. cremoris (Streptococcus cremoris), this protein is Small ribosomal subunit protein uS13 (rpsM).